Here is a 142-residue protein sequence, read N- to C-terminus: Large ribosomal subunit protein uL13 (142 aa).

It belongs to the universal ribosomal protein uL13 family. As to quaternary structure, part of the 50S ribosomal subunit.

This protein is one of the early assembly proteins of the 50S ribosomal subunit, although it is not seen to bind rRNA by itself. It is important during the early stages of 50S assembly. The protein is Large ribosomal subunit protein uL13 of Aeromonas salmonicida (strain A449).